Consider the following 79-residue polypeptide: Small ribosomal subunit protein bS18c (79 aa).

Belongs to the bacterial ribosomal protein bS18 family. Part of the 30S ribosomal subunit.

The protein localises to the plastid. It is found in the chloroplast. This is Small ribosomal subunit protein bS18c from Chaetosphaeridium globosum (Charophycean green alga).